A 253-amino-acid polypeptide reads, in one-letter code: Probable transcriptional regulatory protein Synpcc7942_1017 (253 aa).

The protein belongs to the TACO1 family.

Its subcellular location is the cytoplasm. The protein is Probable transcriptional regulatory protein Synpcc7942_1017 of Synechococcus elongatus (strain ATCC 33912 / PCC 7942 / FACHB-805) (Anacystis nidulans R2).